The primary structure comprises 352 residues: Nicotinate-nucleotide--dimethylbenzimidazole phosphoribosyltransferase (352 aa).

Catalysis depends on glutamate 318, which acts as the Proton acceptor.

It belongs to the CobT family.

The enzyme catalyses 5,6-dimethylbenzimidazole + nicotinate beta-D-ribonucleotide = alpha-ribazole 5'-phosphate + nicotinate + H(+). Its pathway is nucleoside biosynthesis; alpha-ribazole biosynthesis; alpha-ribazole from 5,6-dimethylbenzimidazole: step 1/2. Functionally, catalyzes the synthesis of alpha-ribazole-5'-phosphate from nicotinate mononucleotide (NAMN) and 5,6-dimethylbenzimidazole (DMB). The chain is Nicotinate-nucleotide--dimethylbenzimidazole phosphoribosyltransferase from Dehalococcoides mccartyi (strain CBDB1).